The following is a 179-amino-acid chain: Dynein light chain Tctex-type 5 (179 aa).

This sequence belongs to the dynein light chain Tctex-type family. Interacts with ZMYND10.

The sequence is that of Dynein light chain Tctex-type 5 (DYNLT5) from Homo sapiens (Human).